We begin with the raw amino-acid sequence, 114 residues long: Small ribosomal subunit protein eS25 (114 aa).

The tract at residues 1 to 33 is disordered; sequence MAPKKDKAPPPSSKPAKSGGKQKKKKWSKGKQK. Residues 20 to 30 show a composition bias toward basic residues; that stretch reads GKQKKKKWSKG.

It belongs to the eukaryotic ribosomal protein eS25 family.

The sequence is that of Small ribosomal subunit protein eS25 (RPS25) from Amaranthus cruentus (Purple amaranth).